A 688-amino-acid chain; its full sequence is MARTVDLINFRNFGIMAHIDAGKTTTSERILFHSGRIHKIGETHDGESVMDWMEQEKERGITITSAATSVSWKNCSLNLIDTPGHVDFTVEVERSLRVLDGAIAVLDAQMGVEPQTETVWRQASRYEVPRIIFVNKMDKTGANFERSVQSIQQRLGVKAVPIQLPIGAENDFNGIIDLIEEKVYFFDGGKEEKAEEKPIPDQFKDQVKQMRAHLVEEVANFDDQLMADYLEGKEISIADIKRCIRKGVIGCQFFPVLCGSAFKNKGIKLLLDAVVDFLPSPVDVPQAKAYGEDGNEVLISASDDAPFVGLAFKVATDPFVGRLTFVRVYSGVLKSGSYVKNVRKNKKERVSRLVKMHAQNRNEIEEIRAGDICAIIGLKDTTTGETLVDDKIDVQLEAMQFAQPVISLAVEPKTKADQEKMSIALSKLAEEDPTFKTFTDPETGQTIIAGMGELHLDILVDRMRREFKVEVNVGAPQVSFRETFNKESEVEGKYIKQSGGRGQYGHVKIRFEPNKDKGFEFVDKIVGGRIPREYIKPVQAGLENAMASGPLAGYPMIDIKATLFDGSFHEVDSSEMAFKIAASLALKEAGKVCSPVLLEPIMAIEVTVPEQYFGDTMGDISSRRGLIEGTEQRDNVQVIKAKVPLKEMFGYATDLRSFSQGRGNYVMQFSHYAETPKSVVNEIIATKK.

The tr-type G domain occupies 8–282 (INFRNFGIMA…AVVDFLPSPV (275 aa)). Residues 17 to 24 (AHIDAGKT), 81 to 85 (DTPGH), and 135 to 138 (NKMD) contribute to the GTP site.

This sequence belongs to the TRAFAC class translation factor GTPase superfamily. Classic translation factor GTPase family. EF-G/EF-2 subfamily.

The protein localises to the cytoplasm. In terms of biological role, catalyzes the GTP-dependent ribosomal translocation step during translation elongation. During this step, the ribosome changes from the pre-translocational (PRE) to the post-translocational (POST) state as the newly formed A-site-bound peptidyl-tRNA and P-site-bound deacylated tRNA move to the P and E sites, respectively. Catalyzes the coordinated movement of the two tRNA molecules, the mRNA and conformational changes in the ribosome. This chain is Elongation factor G (fusA), found in Mycoplasma pneumoniae (strain ATCC 29342 / M129 / Subtype 1) (Mycoplasmoides pneumoniae).